A 263-amino-acid polypeptide reads, in one-letter code: MTRIDDTFRRLRAEGKKAFVAYIMAGDPDLETSLAVMRGLPEAGVDIIELGMPFTDPMADGPTIQTAGQRALEGGQTLTRTLEMVRAFRAENAETPIVMMGYYNPIYARGVETFLAEATEAGIDGLIVVDLPPEEDAELCLPAQAAGLNFIRLATPTTDSRRLPKVLQNTSGFVYYVSITGITGAAAAQAADVAPEVARIKAATDLPVIVGFGITTPEAAQDLAGIADGCVVGSAIVKLVGEGRPVAEVLDRVAALAAGAHAA.

Residues glutamate 49 and aspartate 60 each act as proton acceptor in the active site.

This sequence belongs to the TrpA family. Tetramer of two alpha and two beta chains.

It catalyses the reaction (1S,2R)-1-C-(indol-3-yl)glycerol 3-phosphate + L-serine = D-glyceraldehyde 3-phosphate + L-tryptophan + H2O. Its pathway is amino-acid biosynthesis; L-tryptophan biosynthesis; L-tryptophan from chorismate: step 5/5. Functionally, the alpha subunit is responsible for the aldol cleavage of indoleglycerol phosphate to indole and glyceraldehyde 3-phosphate. The chain is Tryptophan synthase alpha chain from Cereibacter sphaeroides (strain ATCC 17029 / ATH 2.4.9) (Rhodobacter sphaeroides).